The sequence spans 517 residues: GMP synthase [glutamine-hydrolyzing] (517 aa).

The 191-residue stretch at 9 to 199 (RILILDFGSQ…VLGICGCERL (191 aa)) folds into the Glutamine amidotransferase type-1 domain. Cys-86 functions as the Nucleophile in the catalytic mechanism. Active-site residues include His-173 and Glu-175. The region spanning 200–392 (WTSESIIEDA…LGLPYEMLYR (193 aa)) is the GMPS ATP-PPase domain. ATP is bound at residue 227–233 (SGGVDSS).

Homodimer.

The catalysed reaction is XMP + L-glutamine + ATP + H2O = GMP + L-glutamate + AMP + diphosphate + 2 H(+). It functions in the pathway purine metabolism; GMP biosynthesis; GMP from XMP (L-Gln route): step 1/1. Functionally, catalyzes the synthesis of GMP from XMP. The sequence is that of GMP synthase [glutamine-hydrolyzing] from Vibrio vulnificus (strain CMCP6).